The primary structure comprises 251 residues: MFSGSSNAVPEGREPPRHIAIIMDGNGRWAKKRFLPRVAGHKRGLDAVREVVKACKEMGVGYLTLFAFSTENWRRPQEEVSFLMDLFLRALEHEVAKLHNNNIRLKVLGSRERFSAELSERIDRAEAKTAGNDGLVLTIAADYGGRWDIVHAVNRLIAEGRSEITEEMVTDRLGMAWAPEPDLFIRTGGEQRISNFLLWQLAYSELYFTDLLWPDFDRAALQEAIHSYWQRERRFGRTSEQLPEHLRRDKL.

Residue aspartate 24 is part of the active site. Aspartate 24 lines the Mg(2+) pocket. Substrate-binding positions include 25–28, tryptophan 29, arginine 37, histidine 41, and 69–71; these read GNGR and STE. The active-site Proton acceptor is the asparagine 72. Residues tryptophan 73, arginine 75, arginine 186, and 192 to 194 contribute to the substrate site; that span reads RIS. Mg(2+) is bound at residue glutamate 205.

It belongs to the UPP synthase family. Homodimer. Requires Mg(2+) as cofactor.

In terms of biological role, catalyzes the condensation of isopentenyl diphosphate (IPP) with allylic pyrophosphates generating different type of terpenoids. In Chromobacterium violaceum (strain ATCC 12472 / DSM 30191 / JCM 1249 / CCUG 213 / NBRC 12614 / NCIMB 9131 / NCTC 9757 / MK), this protein is Isoprenyl transferase.